A 1339-amino-acid chain; its full sequence is Astrotactin-2 (1339 aa).

The first 49 residues, 1–49 (MAAAGARLSPGPGSGLRGRPRLCFHPGPPPLLPLLLLFLLLLPPPPLLA), serve as a signal peptide directing secretion. At 50-206 (GATAAASREP…IVEEQMHILH (157 aa)) the chain is on the lumenal side. Asn-168 is a glycosylation site (N-linked (GlcNAc...) asparagine). The helical transmembrane segment at 207-227 (ISVMGGLIALLLLLLVFTVAL) threads the bilayer. Over 228–434 (YAQRRWQKRR…KGLLKSPVNK (207 aa)) the chain is Cytoplasmic. Disordered regions lie at residues 296–316 (EEDE…EFGS) and 363–408 (TPIE…ADDE). The chain crosses the membrane as a helical span at residues 435–455 (TALTLIAVSSCILAMVCGSQM). Residues 456–1339 (SCPLTVKVTL…RNTYGESKGR (884 aa)) lie on the Lumenal side of the membrane. 3 consecutive EGF-like domains span residues 510–550 (VRDL…HLCV), 651–695 (PVRD…SGCY), and 699–751 (KGID…KSCL). 9 cysteine pairs are disulfide-bonded: Cys-514–Cys-526, Cys-522–Cys-533, Cys-535–Cys-549, Cys-655–Cys-668, Cys-662–Cys-679, Cys-681–Cys-694, Cys-703–Cys-715, Cys-711–Cys-735, and Cys-737–Cys-750. Residues Asn-770 and Asn-783 are each glycosylated (N-linked (GlcNAc...) asparagine). 3 disulfide bridges follow: Cys-825–Cys-987, Cys-916–Cys-977, and Cys-983–Cys-990. Residue Asn-1020 is glycosylated (N-linked (GlcNAc...) asparagine). 5 cysteine pairs are disulfide-bonded: Cys-1036-Cys-1047, Cys-1049-Cys-1062, Cys-1136-Cys-1158, Cys-1190-Cys-1277, and Cys-1298-Cys-1321. Positions 1065–1188 (LLQPVLRLSP…SELSTVTLRT (124 aa)) constitute a Fibronectin type-III domain.

Belongs to the astrotactin family. In terms of assembly, interacts with ASTN1; the interaction is not calcium-dependent.

Its subcellular location is the membrane. It is found in the perikaryon. The protein resides in the cytoplasm. The protein localises to the cell cortex. It localises to the early endosome. Its subcellular location is the late endosome. It is found in the cytoplasmic vesicle. The protein resides in the clathrin-coated vesicle. Its function is as follows. Mediates recycling of the neuronal cell adhesion molecule ASTN1 to the anterior pole of the cell membrane in migrating neurons. Promotes ASTN1 internalization and intracellular transport of endocytosed ASTN1. Selectively binds inositol-4,5-bisphosphate, inositol-3,4,5-trisphosphate and inositol-1,3,4,5-tetrakisphosphate, suggesting it is recruited to membranes that contain lipids with a phosphoinositide headgroup. This Homo sapiens (Human) protein is Astrotactin-2 (ASTN2).